The primary structure comprises 297 residues: Mitochondrial nicotinamide adenine dinucleotide transporter SLC25A52 (297 aa).

Solcar repeat units follow at residues 28 to 108 (VGEM…LSCL), 116 to 200 (PEFA…IKEH), and 209 to 296 (AHLV…LLKF). The next 6 helical transmembrane spans lie at 34 to 51 (YLCGCCAAFNNVAITYPI), 85 to 105 (LPPLMQKTTTLALMFGLYEDL), 118 to 138 (FATHGVAAVLAGTAEAIFTPL), 179 to 199 (ILFRNGLSNVLFFGLRGPIKE), 215 to 235 (FIGGGLLGAMLGFLCFPINVV), and 268 to 289 (LFRGAHLNYHRSLISWGIINAT).

Belongs to the mitochondrial carrier (TC 2.A.29) family.

It is found in the mitochondrion inner membrane. The catalysed reaction is NAD(+)(in) = NAD(+)(out). In terms of biological role, mitochondrial membrane carrier protein that mediates the import of NAD(+) into mitochondria. Compared to SLC25A51, SLC25A52-mediated transport is not essential for the import of NAD(+) in mitochondria. The transport mechanism, uniport or antiport, its electrogenicity and substrate selectivity, remain to be elucidated. The protein is Mitochondrial nicotinamide adenine dinucleotide transporter SLC25A52 of Homo sapiens (Human).